Consider the following 138-residue polypeptide: Large ribosomal subunit protein uL16 (138 aa).

The segment covering 1-15 (MLSPKKVKYRKKQRG) has biased composition (basic residues). The segment at 1 to 21 (MLSPKKVKYRKKQRGRLSGEA) is disordered.

The protein belongs to the universal ribosomal protein uL16 family. As to quaternary structure, part of the 50S ribosomal subunit.

Its function is as follows. Binds 23S rRNA and is also seen to make contacts with the A and possibly P site tRNAs. The polypeptide is Large ribosomal subunit protein uL16 (Borrelia garinii subsp. bavariensis (strain ATCC BAA-2496 / DSM 23469 / PBi) (Borreliella bavariensis)).